The sequence spans 199 residues: Hematopoietic prostaglandin D synthase (199 aa).

Residues 2–79 (PNYKLLYFNM…YLTKNTDLAG (78 aa)) form the GST N-terminal domain. Glutathione is bound by residues Tyr8, Arg14, Trp39, 49-51 (GKI), and 63-64 (QS). The 119-residue stretch at 81–199 (TALEQCQADA…WILKRPQTKL (119 aa)) folds into the GST C-terminal domain.

This sequence belongs to the GST superfamily. Sigma family. As to quaternary structure, homodimer. The cofactor is glutathione. Expressed in skin and oviduct.

Its subcellular location is the cytoplasm. The enzyme catalyses prostaglandin H2 = prostaglandin D2. The catalysed reaction is RX + glutathione = an S-substituted glutathione + a halide anion + H(+). It catalyses the reaction 2-glyceryl-prostaglandin H2 = 2-glyceryl-prostaglandin D2. In terms of biological role, bifunctional enzyme which catalyzes both the conversion of PGH2 to PGD2, a prostaglandin involved in smooth muscle contraction/relaxation and a potent inhibitor of platelet aggregation, and the conjugation of glutathione with a wide range of aryl halides and organic isothiocyanates. Also exhibits low glutathione-peroxidase activity. This is Hematopoietic prostaglandin D synthase from Mus musculus (Mouse).